Consider the following 161-residue polypeptide: Protein-export protein SecB (161 aa).

The interval 141–161 is disordered; sequence KKQQETAGEQPDQPADTITRH.

Belongs to the SecB family. In terms of assembly, homotetramer, a dimer of dimers. One homotetramer interacts with 1 SecA dimer.

It is found in the cytoplasm. Its function is as follows. One of the proteins required for the normal export of preproteins out of the cell cytoplasm. It is a molecular chaperone that binds to a subset of precursor proteins, maintaining them in a translocation-competent state. It also specifically binds to its receptor SecA. This chain is Protein-export protein SecB, found in Nitrosomonas europaea (strain ATCC 19718 / CIP 103999 / KCTC 2705 / NBRC 14298).